The following is a 256-amino-acid chain: Small ribosomal subunit protein eS1 (256 aa).

Ala-2 is modified (N-acetylalanine; partial).

The protein belongs to the eukaryotic ribosomal protein eS1 family. Component of the small ribosomal subunit. Mature ribosomes consist of a small (40S) and a large (60S) subunit. The 40S subunit contains about 33 different proteins and 1 molecule of RNA (18S). The 60S subunit contains about 49 different proteins and 3 molecules of RNA (25S, 5.8S and 5S).

The protein localises to the cytoplasm. The protein is Small ribosomal subunit protein eS1 of Laccaria bicolor (strain S238N-H82 / ATCC MYA-4686) (Bicoloured deceiver).